Reading from the N-terminus, the 392-residue chain is 23S rRNA (uracil(747)-C(5))-methyltransferase RlmC (392 aa).

The [4Fe-4S] cluster site is built by Cys4, Cys12, Cys15, and Cys93. Gln218, Phe247, Glu275, and Asn321 together coordinate S-adenosyl-L-methionine. The Nucleophile role is filled by Cys348.

Belongs to the class I-like SAM-binding methyltransferase superfamily. RNA M5U methyltransferase family. RlmC subfamily.

The enzyme catalyses uridine(747) in 23S rRNA + S-adenosyl-L-methionine = 5-methyluridine(747) in 23S rRNA + S-adenosyl-L-homocysteine + H(+). In terms of biological role, catalyzes the formation of 5-methyl-uridine at position 747 (m5U747) in 23S rRNA. In Haemophilus influenzae (strain PittEE), this protein is 23S rRNA (uracil(747)-C(5))-methyltransferase RlmC.